The primary structure comprises 460 residues: 3-isopropylmalate dehydratase large subunit (460 aa).

3 residues coordinate [4Fe-4S] cluster: C338, C398, and C401.

The protein belongs to the aconitase/IPM isomerase family. LeuC type 1 subfamily. Heterodimer of LeuC and LeuD. It depends on [4Fe-4S] cluster as a cofactor.

The enzyme catalyses (2R,3S)-3-isopropylmalate = (2S)-2-isopropylmalate. Its pathway is amino-acid biosynthesis; L-leucine biosynthesis; L-leucine from 3-methyl-2-oxobutanoate: step 2/4. Its function is as follows. Catalyzes the isomerization between 2-isopropylmalate and 3-isopropylmalate, via the formation of 2-isopropylmaleate. This Streptococcus thermophilus (strain ATCC BAA-250 / LMG 18311) protein is 3-isopropylmalate dehydratase large subunit.